The sequence spans 680 residues: MGKSRTKRFKRPQFSPTGDCQAEAAAAANGTGGEEDDGPAAELLEKLQHPSAEVRECACAGLARLVQQRPALPGLARRDAVRRLGPLLLDPSLAVRETAAGALRNLSACGGFEVCDDMVTKDIMTPLVALLKECSAGLDSNEMSLQEKKDQNRNSIENIANETVNVLWNICECSSRAVSIFNKEGCLEIVLKYLSRFPTNVDLAISVAYCLQTVTEDNPELLKSFSATALNMLESALLSPVSSMESLLLKTLVAGTIWNLKDIIPCKSQAEIINALLKILSEVLGMDAGEMVIQMKEAETQRLKTAAEAEEILENTNGDDLIEDDEMEGISHKRRVRRKTFVSDLLPPTDKELRETIALLTAQQTALEIIVNMCCNEDPSDDEWEELSSSDESDAFMENSFSECGGQLFSPLCLSHEVHTALTNYLIPKKIFEKTAFPNSIAVDLCSRNPTWKPLIRKMNTIQCRALFCLQSLVSLLDVEHLGGAAALQTLAQHLSQLLFSQPDFAKHVDFLEAISSALRALLQTMASKNISQCMTPDQLMTLCKAGIHSSNVGVRVNVVSILGITGSVLAKEDGTLETLKNIGCFLLEVTTKDPSLVVAGEALDALFDVFADGKEAERASIQIKLLSALKEFQPVFKMKIRKEGRGNYSTDQLCVLDNVKMNLRRFIAYQETVEKRLTS.

Positions 1 to 11 (MGKSRTKRFKR) are enriched in basic residues. Residues 1 to 39 (MGKSRTKRFKRPQFSPTGDCQAEAAAAANGTGGEEDDGP) are disordered. At serine 15 the chain carries Phosphoserine. Over residues 18-29 (GDCQAEAAAAAN) the composition is skewed to low complexity. HEAT repeat units follow at residues 38-69 (GPAAELLEKLQHPSAEVRECACAGLARLVQQR) and 74-110 (GLARRDAVRRLGPLLLDPSLAVRETAAGALRNLSACG). A Phosphoserine modification is found at serine 144. Threonine 340 bears the Phosphothreonine mark.

It belongs to the nuclear import and ribosome assembly adapter family. Component of a hexameric 5S RNP precursor complex, composed of 5S RNA, RRS1, RPF2/BXDC1, RPL5, RPL11 and HEATR3; this complex acts as a precursor for ribosome assembly.

Plays a role in ribosome biogenesis and in nuclear import of the 60S ribosomal protein L5/large ribosomal subunit protein uL18 (RPL5). Required for proper erythrocyte maturation. The chain is HEAT repeat-containing protein 3 (HEATR3) from Homo sapiens (Human).